A 766-amino-acid chain; its full sequence is Oligopeptide transporter 7 (766 aa).

Residues 1 to 58 are disordered; sequence MEESEQVLPLLTNPKDLTNPSYASSSSSSSEPRDETEDLLLPISDENEEEEEENSPIR. Over residues 45-54 the composition is skewed to acidic residues; that stretch reads DENEEEEEEN. The next 15 helical transmembrane spans lie at 79-99, 104-124, 154-174, 184-204, 247-267, 287-307, 324-344, 390-410, 446-466, 477-497, 509-529, 561-581, 627-647, 676-696, and 709-729; these read MWVL…FFWY, LTIS…LMAA, ITIF…VTVV, FFVS…WAGI, FVIA…LFQI, IGSG…STIS, VGVG…WLDV, LCTF…ATIM, VPEW…IFAC, WWGV…IGII, IITE…NMCF, FMAQ…TAWW, LYKS…LVWL, ATAV…FVVF, and VLSG…YMCL.

This sequence belongs to the oligopeptide OPT transporter (TC 2.A.67.1) family. As to expression, expressed in the major and the first-order veins and in the hydathodes of the leaves. In the roots, expressed in circular zones surrounding lateral root primordia and in some part of the root epidermis. Expressed also in the sepals and the cortical tissues of the stem, but not in the conducting bundles, the petals or the reproductive tissues.

It localises to the membrane. Its function is as follows. Involved in the translocation of tetra- and pentapeptides across the cellular membrane in an energy-dependent manner. May also transport cadmium complexes. In Arabidopsis thaliana (Mouse-ear cress), this protein is Oligopeptide transporter 7 (OPT7).